A 324-amino-acid polypeptide reads, in one-letter code: N-acetylmuramoyl-L-alanine amidase sle1 (324 aa).

A signal peptide spans 1–25 (MQKKYITAIIGTTALSALASTHAQA). LysM domains follow at residues 27 to 70 (TTHT…VLKV), 84 to 127 (TVYT…KLKV), and 147 to 190 (ATYT…KLKV). The region spanning 200 to 324 (SNNTRSNGGY…YQVRNYKFIH (125 aa)) is the Peptidase C51 domain.

It localises to the secreted. Its subcellular location is the cell surface. The enzyme catalyses Hydrolyzes the link between N-acetylmuramoyl residues and L-amino acid residues in certain cell-wall glycopeptides.. Peptidoglycan hydrolase involved in the splitting of the septum during cell division. This is N-acetylmuramoyl-L-alanine amidase sle1 (sle1) from Staphylococcus epidermidis (strain ATCC 12228 / FDA PCI 1200).